A 476-amino-acid chain; its full sequence is Adenosylhomocysteinase (476 aa).

3 residues coordinate substrate: threonine 61, aspartate 140, and glutamate 200. 201–203 (TTT) contributes to the NAD(+) binding site. Substrate is bound by residues lysine 230 and aspartate 234. NAD(+) contacts are provided by residues asparagine 235, 264–269 (GYGDVG), glutamate 287, asparagine 322, 343–345 (IGH), and asparagine 389.

It belongs to the adenosylhomocysteinase family. It depends on NAD(+) as a cofactor.

The protein resides in the cytoplasm. The enzyme catalyses S-adenosyl-L-homocysteine + H2O = L-homocysteine + adenosine. It functions in the pathway amino-acid biosynthesis; L-homocysteine biosynthesis; L-homocysteine from S-adenosyl-L-homocysteine: step 1/1. Functionally, may play a key role in the regulation of the intracellular concentration of adenosylhomocysteine. This is Adenosylhomocysteinase from Acidovorax sp. (strain JS42).